A 346-amino-acid polypeptide reads, in one-letter code: Phosphoribosylformylglycinamidine cyclo-ligase (346 aa).

Belongs to the AIR synthase family.

The protein resides in the cytoplasm. It catalyses the reaction 2-formamido-N(1)-(5-O-phospho-beta-D-ribosyl)acetamidine + ATP = 5-amino-1-(5-phospho-beta-D-ribosyl)imidazole + ADP + phosphate + H(+). The protein operates within purine metabolism; IMP biosynthesis via de novo pathway; 5-amino-1-(5-phospho-D-ribosyl)imidazole from N(2)-formyl-N(1)-(5-phospho-D-ribosyl)glycinamide: step 2/2. This Proteus mirabilis (strain HI4320) protein is Phosphoribosylformylglycinamidine cyclo-ligase.